The following is a 332-amino-acid chain: Anthranilate phosphoribosyltransferase (332 aa).

5-phospho-alpha-D-ribose 1-diphosphate contacts are provided by residues G78, 81–82 (GD), S86, 88–91 (NIST), 106–114 (KHGNKSITS), and S118. G78 is an anthranilate binding site. S90 is a Mg(2+) binding site. N109 is a binding site for anthranilate. R163 serves as a coordination point for anthranilate. D222 and E223 together coordinate Mg(2+).

This sequence belongs to the anthranilate phosphoribosyltransferase family. As to quaternary structure, homodimer. It depends on Mg(2+) as a cofactor.

It carries out the reaction N-(5-phospho-beta-D-ribosyl)anthranilate + diphosphate = 5-phospho-alpha-D-ribose 1-diphosphate + anthranilate. Its pathway is amino-acid biosynthesis; L-tryptophan biosynthesis; L-tryptophan from chorismate: step 2/5. Functionally, catalyzes the transfer of the phosphoribosyl group of 5-phosphorylribose-1-pyrophosphate (PRPP) to anthranilate to yield N-(5'-phosphoribosyl)-anthranilate (PRA). The chain is Anthranilate phosphoribosyltransferase from Staphylococcus aureus (strain Mu3 / ATCC 700698).